A 379-amino-acid chain; its full sequence is MSCPYAGNGNEHDDSAVPLTTEVGKIYGEYLMLDKLLDAQCMLSEEDKRPVHDEHLFIITHQAYELWFKQIIFEFDSIRDMLDAEVIDETKTLEIVKRLHRVVLILKLLVDQVPILETMTPLDFMDFRKYLAPASGFQSLQFRLIENKLGVLTEQRVRYNQKYSDVFSDEEARNSIRNSEKDPSLLELVQRWLERTPGLEESGFNFWAKFQESVDRFLAAQVQSAMEEPVEKAKNYRLMDIEKRREVYRSIFDPAVHDALVRRGDRRFSHRALQGAIMITFYRDEPRFSQPHQLLTLLMDIDSLITKWRYNHVIMVQRMIGSQQLGTGGSSGYQYLRSTLSDRYKVFLDLFNLSTFLIPREAIPPLDETIRKKLINKSV.

Substrate contacts are provided by residues 57 to 61 and Arg-128; that span reads FIITH. His-312 is a binding site for heme. Thr-327 contacts substrate.

The protein belongs to the tryptophan 2,3-dioxygenase family. In terms of assembly, homotetramer. Dimer of dimers. Heme serves as cofactor.

The enzyme catalyses L-tryptophan + O2 = N-formyl-L-kynurenine. Its pathway is amino-acid degradation; L-tryptophan degradation via kynurenine pathway; L-kynurenine from L-tryptophan: step 1/2. It participates in pigment biosynthesis; ommochrome biosynthesis. In terms of biological role, heme-dependent dioxygenase that catalyzes the oxidative cleavage of the L-tryptophan (L-Trp) pyrrole ring and converts L-tryptophan to N-formyl-L-kynurenine. Catalyzes the oxidative cleavage of the indole moiety. This Drosophila yakuba (Fruit fly) protein is Tryptophan 2,3-dioxygenase.